The chain runs to 313 residues: Foldase protein PrsA (313 aa).

Positions 1–20 are cleaved as a signal peptide; sequence MKKKLLAGAITLLSVATLAA. A lipid anchor (N-palmitoyl cysteine) is attached at Cys-21. Cys-21 carries the S-diacylglycerol cysteine lipid modification. Positions 143 to 241 constitute a PpiC domain; that stretch reads TPDVTAQIIR…SQYYIVKLTK (99 aa).

Belongs to the PrsA family.

It localises to the cell membrane. It catalyses the reaction [protein]-peptidylproline (omega=180) = [protein]-peptidylproline (omega=0). Functionally, plays a major role in protein secretion by helping the post-translocational extracellular folding of several secreted proteins. The polypeptide is Foldase protein PrsA (Streptococcus pneumoniae serotype 4 (strain ATCC BAA-334 / TIGR4)).